Here is a 321-residue protein sequence, read N- to C-terminus: Bifunctional methyltransferase/endonuclease (321 aa).

Residues M1–R86 are probable methylated-DNA--protein-cysteine methyltransferase. C61 is a catalytic residue. The tract at residues L87–I318 is endonuclease V. D145 and D204 together coordinate Mg(2+).

The protein in the N-terminal section; belongs to the MGMT family. This sequence in the C-terminal section; belongs to the endonuclease V family. The cofactor is Mg(2+).

It localises to the cytoplasm. The catalysed reaction is Endonucleolytic cleavage at apurinic or apyrimidinic sites to products with a 5'-phosphate.. DNA repair enzyme involved in the repair of deaminated bases. Selectively cleaves double-stranded DNA at the second phosphodiester bond 3' to a deoxyinosine leaving behind the intact lesion on the nicked DNA. The polypeptide is Bifunctional methyltransferase/endonuclease (Thermoplasma volcanium (strain ATCC 51530 / DSM 4299 / JCM 9571 / NBRC 15438 / GSS1)).